We begin with the raw amino-acid sequence, 369 residues long: 3-dehydroquinate synthase (369 aa).

NAD(+) contacts are provided by residues 78–83, 112–116, 136–137, Lys-149, Lys-158, and 176–179; these read DGERYK, GVIGD, TT, and TLTT. Zn(2+) is bound by residues Glu-191, His-254, and His-271.

This sequence belongs to the sugar phosphate cyclases superfamily. Dehydroquinate synthase family. It depends on NAD(+) as a cofactor. Requires Co(2+) as cofactor. The cofactor is Zn(2+).

It is found in the cytoplasm. The enzyme catalyses 7-phospho-2-dehydro-3-deoxy-D-arabino-heptonate = 3-dehydroquinate + phosphate. It functions in the pathway metabolic intermediate biosynthesis; chorismate biosynthesis; chorismate from D-erythrose 4-phosphate and phosphoenolpyruvate: step 2/7. Functionally, catalyzes the conversion of 3-deoxy-D-arabino-heptulosonate 7-phosphate (DAHP) to dehydroquinate (DHQ). The sequence is that of 3-dehydroquinate synthase from Nitrosomonas europaea (strain ATCC 19718 / CIP 103999 / KCTC 2705 / NBRC 14298).